The primary structure comprises 270 residues: Formamidopyrimidine-DNA glycosylase (270 aa).

Pro-2 (schiff-base intermediate with DNA) is an active-site residue. The Proton donor role is filled by Glu-3. Lys-58 functions as the Proton donor; for beta-elimination activity in the catalytic mechanism. DNA contacts are provided by His-91, Arg-110, and Arg-151. The segment at 236–270 (FAYGRAGEFCKVCGTTLREVKLGQRASVYCPRCQR) adopts an FPG-type zinc-finger fold. The Proton donor; for delta-elimination activity role is filled by Arg-260.

This sequence belongs to the FPG family. In terms of assembly, monomer. Zn(2+) serves as cofactor.

The catalysed reaction is Hydrolysis of DNA containing ring-opened 7-methylguanine residues, releasing 2,6-diamino-4-hydroxy-5-(N-methyl)formamidopyrimidine.. It catalyses the reaction 2'-deoxyribonucleotide-(2'-deoxyribose 5'-phosphate)-2'-deoxyribonucleotide-DNA = a 3'-end 2'-deoxyribonucleotide-(2,3-dehydro-2,3-deoxyribose 5'-phosphate)-DNA + a 5'-end 5'-phospho-2'-deoxyribonucleoside-DNA + H(+). In terms of biological role, involved in base excision repair of DNA damaged by oxidation or by mutagenic agents. Acts as a DNA glycosylase that recognizes and removes damaged bases. Has a preference for oxidized purines, such as 7,8-dihydro-8-oxoguanine (8-oxoG). Has AP (apurinic/apyrimidinic) lyase activity and introduces nicks in the DNA strand. Cleaves the DNA backbone by beta-delta elimination to generate a single-strand break at the site of the removed base with both 3'- and 5'-phosphates. The sequence is that of Formamidopyrimidine-DNA glycosylase from Ectopseudomonas mendocina (strain ymp) (Pseudomonas mendocina).